Reading from the N-terminus, the 198-residue chain is Glycerol-3-phosphate acyltransferase 2 (198 aa).

A run of 4 helical transmembrane segments spans residues 4–24, 71–91, 113–133, and 147–167; these read TYLL…LVVG, LPMV…AVLG, LLCY…TLLF, and VVAV…AMCL.

This sequence belongs to the PlsY family. Probably interacts with PlsX.

It localises to the cell membrane. It catalyses the reaction an acyl phosphate + sn-glycerol 3-phosphate = a 1-acyl-sn-glycero-3-phosphate + phosphate. It functions in the pathway lipid metabolism; phospholipid metabolism. In terms of biological role, catalyzes the transfer of an acyl group from acyl-phosphate (acyl-PO(4)) to glycerol-3-phosphate (G3P) to form lysophosphatidic acid (LPA). This enzyme utilizes acyl-phosphate as fatty acyl donor, but not acyl-CoA or acyl-ACP. The polypeptide is Glycerol-3-phosphate acyltransferase 2 (Bacillus cereus (strain ZK / E33L)).